Reading from the N-terminus, the 165-residue chain is Deoxyuridine 5'-triphosphate nucleotidohydrolase (165 aa).

Residues 66-68 (RSG), Asn79, 83-85 (TVD), and Lys93 contribute to the substrate site. The interval 134–165 (ETSRGAGGHGSSGGHASLTPGARSAARVAQEG) is disordered.

Belongs to the dUTPase family. The cofactor is Mg(2+).

It carries out the reaction dUTP + H2O = dUMP + diphosphate + H(+). It functions in the pathway pyrimidine metabolism; dUMP biosynthesis; dUMP from dCTP (dUTP route): step 2/2. Its function is as follows. This enzyme is involved in nucleotide metabolism: it produces dUMP, the immediate precursor of thymidine nucleotides and it decreases the intracellular concentration of dUTP so that uracil cannot be incorporated into DNA. This chain is Deoxyuridine 5'-triphosphate nucleotidohydrolase, found in Nocardia farcinica (strain IFM 10152).